We begin with the raw amino-acid sequence, 197 residues long: Peptide deformylase (197 aa).

Residues cysteine 106 and histidine 148 each coordinate Fe cation. Residue glutamate 149 is part of the active site. Fe cation is bound at residue histidine 152.

This sequence belongs to the polypeptide deformylase family. It depends on Fe(2+) as a cofactor.

It catalyses the reaction N-terminal N-formyl-L-methionyl-[peptide] + H2O = N-terminal L-methionyl-[peptide] + formate. Removes the formyl group from the N-terminal Met of newly synthesized proteins. Requires at least a dipeptide for an efficient rate of reaction. N-terminal L-methionine is a prerequisite for activity but the enzyme has broad specificity at other positions. This chain is Peptide deformylase, found in Mycolicibacterium vanbaalenii (strain DSM 7251 / JCM 13017 / BCRC 16820 / KCTC 9966 / NRRL B-24157 / PYR-1) (Mycobacterium vanbaalenii).